The primary structure comprises 58 residues: Large ribosomal subunit protein uL30 (58 aa).

This sequence belongs to the universal ribosomal protein uL30 family. In terms of assembly, part of the 50S ribosomal subunit.

The protein is Large ribosomal subunit protein uL30 of Pseudomonas aeruginosa (strain LESB58).